We begin with the raw amino-acid sequence, 403 residues long: Putative F-box/LRR-repeat protein At5g38386 (403 aa).

Residues 1-47 (MDHLSNLPDELLCHIMSFLTTKEAALISVLSKRWRNLIAFVPNLDIF) enclose the F-box domain. LRR repeat units follow at residues 64 to 91 (IRQL…SLCC), 93 to 119 (GGSY…DLSM), 131 to 156 (VFEN…VMNH), 175 to 203 (LKTL…SYSD), 243 to 274 (YLYF…SIKS), and 275 to 300 (VESR…VLEA).

The protein is Putative F-box/LRR-repeat protein At5g38386 of Arabidopsis thaliana (Mouse-ear cress).